Here is a 147-residue protein sequence, read N- to C-terminus: Hemoglobin subunit beta (147 aa).

The residue at position 2 (Val2) is an N-acetylvaline. One can recognise a Globin domain in the interval 3–147 (HLTGEEKSAV…VANALAHKYH (145 aa)). Thr13 is subject to Phosphothreonine. Ser45 is subject to Phosphoserine. An N6-acetyllysine modification is found at Lys60. His64 contacts heme b. Lys83 bears the N6-acetyllysine mark. Residue His93 coordinates heme b. Cys94 carries the S-nitrosocysteine modification. Lys145 is modified (N6-acetyllysine).

The protein belongs to the globin family. In terms of assembly, heterotetramer of two alpha chains and two beta chains. As to expression, red blood cells.

Involved in oxygen transport from the lung to the various peripheral tissues. This Callithrix jacchus (White-tufted-ear marmoset) protein is Hemoglobin subunit beta (HBB).